The chain runs to 77 residues: Probable Vpr-like protein (77 aa).

A Nuclear export signal motif is present at residues 34–42 (LIRLLQGLL). The Nuclear localization signal signature appears at 44 to 53 (RLRFRKPKSK).

It is found in the virion. The protein localises to the host nucleus. Its function is as follows. Seems to function as a Vpr-like protein, since it mediates host cell cycle arrest in G2 phase. Cell cycle arrest creates a favorable environment for maximizing viral expression and production. This chain is Probable Vpr-like protein, found in Felidae (cat family).